The sequence spans 122 residues: Large ribosomal subunit protein uL14 (122 aa).

Belongs to the universal ribosomal protein uL14 family. In terms of assembly, part of the 50S ribosomal subunit. Forms a cluster with proteins L3 and L19. In the 70S ribosome, L14 and L19 interact and together make contacts with the 16S rRNA in bridges B5 and B8.

Functionally, binds to 23S rRNA. Forms part of two intersubunit bridges in the 70S ribosome. The chain is Large ribosomal subunit protein uL14 from Brucella anthropi (strain ATCC 49188 / DSM 6882 / CCUG 24695 / JCM 21032 / LMG 3331 / NBRC 15819 / NCTC 12168 / Alc 37) (Ochrobactrum anthropi).